We begin with the raw amino-acid sequence, 468 residues long: Peroxisome proliferator-activated receptor alpha (468 aa).

The nuclear receptor DNA-binding region spans 99–173 (NIECRICGDK…VGMSHNAIRF (75 aa)). 2 NR C4-type zinc fingers span residues 102 to 122 (CRIC…CEGC) and 139 to 161 (CDRS…FHKC). The 228-residue stretch at 239 to 466 (FVIHDMETLC…HPLLQEIYRD (228 aa)) folds into the NR LBD domain. The tract at residues 304–433 (DQVTLLKYGV…PKLLQKMVDL (130 aa)) is required for heterodimerization with RXRA.

Belongs to the nuclear hormone receptor family. NR1 subfamily. As to quaternary structure, heterodimer; with RXRA. This heterodimerization is required for DNA binding and transactivation activity. Interacts with NCOA3 coactivator. Interacts with CITED2; the interaction stimulates its transcriptional activity. Also interacts with PPARBP in vitro. Interacts with AKAP13, LPIN1, PRDM16 and coactivator NCOA6. Interacts with ASXL1 and ASXL2. Interacts with PER2. Interacts with SIRT1; the interaction seems to be modulated by NAD(+) levels. Interacts with CRY1 and CRY2. In hepatocytes, interacts with PAQR3 and HUWE1; the interactions promote PPARA poylubiquitination and HUWE1-mediated degradation. Ubiquitinated by E3 ubiquitin-protein ligase HUWE1; leading to proteasomal degradation. Post-translationally, phosphorylated. Highly expressed in liver, kidney and heart. Very weakly expressed in brain and testis.

The protein localises to the nucleus. Its function is as follows. Ligand-activated transcription factor. Key regulator of lipid metabolism. Activated by the endogenous ligand 1-palmitoyl-2-oleoyl-sn-glycerol-3-phosphocholine (16:0/18:1-GPC). Activated by oleylethanolamide, a naturally occurring lipid that regulates satiety. Receptor for peroxisome proliferators such as hypolipidemic drugs and fatty acids. Regulates the peroxisomal beta-oxidation pathway of fatty acids. Functions as a transcription activator for the ACOX1 and P450 genes. Transactivation activity requires heterodimerization with RXRA and is antagonized by NR2C2. May be required for the propagation of clock information to metabolic pathways regulated by PER2. The sequence is that of Peroxisome proliferator-activated receptor alpha (Ppara) from Mus musculus (Mouse).